Reading from the N-terminus, the 73-residue chain is MEEGETVRKILLAILFFALVVSLVGLYVSANVMIDVWAGQKYSTVYKVLMNAAMLLIVIYLIQRLIIQPRNSD.

2 consecutive transmembrane segments (helical) span residues 10–30 (ILLA…YVSA) and 42–62 (YSTV…IYLI).

It is found in the cell membrane. This is an uncharacterized protein from Archaeoglobus fulgidus (strain ATCC 49558 / DSM 4304 / JCM 9628 / NBRC 100126 / VC-16).